We begin with the raw amino-acid sequence, 102 residues long: Ferredoxin-thioredoxin reductase, catalytic chain (102 aa).

C53 serves as a coordination point for [4Fe-4S] cluster. Catalysis depends on C55, which acts as the Nucleophile. A disulfide bridge links C55 with C85. Residues C72, C74, and C83 each contribute to the [4Fe-4S] cluster site.

It belongs to the ferredoxin thioredoxin reductase beta subunit family. Heterodimer of subunit A (variable subunit) and subunit B (catalytic subunit). Heterodimeric FTR forms a complex with ferredoxin and thioredoxin. [4Fe-4S] cluster is required as a cofactor.

It localises to the plastid. Its subcellular location is the chloroplast. The enzyme catalyses [thioredoxin]-disulfide + 2 reduced [2Fe-2S]-[ferredoxin] + 2 H(+) = [thioredoxin]-dithiol + 2 oxidized [2Fe-2S]-[ferredoxin]. Its function is as follows. Catalytic subunit of the ferredoxin-thioredoxin reductase (FTR), which catalyzes the two-electron reduction of thioredoxins by the electrons provided by reduced ferredoxin. The polypeptide is Ferredoxin-thioredoxin reductase, catalytic chain (ftrB) (Guillardia theta (Cryptophyte)).